An 872-amino-acid polypeptide reads, in one-letter code: Metabotropic glutamate receptor 2 (872 aa).

An N-terminal signal peptide occupies residues 1–18; the sequence is MESLLRFLALLLLRGAVA. Topologically, residues 19–568 are extracellular; the sequence is EGPAKKVLTL…EYIRWGDAWA (550 aa). The cysteines at positions 50 and 92 are disulfide-linked. L-glutamate is bound by residues arginine 57, arginine 61, serine 145, alanine 166, and threonine 168. N-linked (GlcNAc...) asparagine glycosylation is found at asparagine 203 and asparagine 286. Cystine bridges form between cysteine 234/cysteine 518, cysteine 355/cysteine 362, cysteine 400/cysteine 407, cysteine 500/cysteine 519, cysteine 504/cysteine 522, cysteine 525/cysteine 537, and cysteine 540/cysteine 553. Aspartate 295 is an L-glutamate binding site. An N-linked (GlcNAc...) asparagine glycan is attached at asparagine 338. Lysine 377 serves as a coordination point for L-glutamate. N-linked (GlcNAc...) asparagine glycosylation is present at asparagine 402. A glycan (N-linked (GlcNAc...) asparagine) is linked at asparagine 547. The helical transmembrane segment at 569 to 589 threads the bilayer; it reads VGPVTIACLGALATLFVLGVF. At 590-604 the chain is on the cytoplasmic side; that stretch reads VRHNATPVVKASGRE. The helical transmembrane segment at 605–625 threads the bilayer; the sequence is LCYILLGGVFLCYCMTFIFIA. The Extracellular segment spans residues 626 to 633; it reads KPSTAVCT. Cysteine 632 and cysteine 721 are disulfide-bonded. Residues 634–651 traverse the membrane as a helical segment; it reads LRRLGLGTAFSVCYSALL. The Cytoplasmic segment spans residues 652-679; it reads TKTNRIARIFGGAREGAQRPRFISPASQ. The segment at 677–685 is important for interaction with HTR2A; that stretch reads ASQVAICLA. The chain crosses the membrane as a helical span at residues 680-700; sequence VAICLALISGQLLIVAAWLVV. At 701–726 the chain is on the extracellular side; sequence EAPGIGKETAPERREVVTLRCNHRDA. A helical membrane pass occupies residues 727-747; the sequence is SMLGSLAYNVLLIALCTLYAF. Residues 748–760 are Cytoplasmic-facing; the sequence is KTRKCPENFNEAK. Residues 761 to 781 form a helical membrane-spanning segment; that stretch reads FIGFTMYTTCIIWLAFLPIFY. Residues 782–798 lie on the Extracellular side of the membrane; the sequence is VTSSDYRVQTTTMCVSV. Residues 799 to 819 traverse the membrane as a helical segment; that stretch reads SLSGSVVLGCLFAPKLHIILF. The Cytoplasmic portion of the chain corresponds to 820–872; it reads QPQKNVVSHRAPTSRFGSAAPRASANLGQGSGSQLVPTVCNGREVVDSTTSSL.

The protein belongs to the G-protein coupled receptor 3 family. Forms heterodimers with GRM3 or GRM4. Interacts with GNAI1. Interacts with TAMALIN. Interacts with HTR2A. As to expression, detected in neurons in brain cortex (at protein level).

It is found in the cell membrane. It localises to the synapse. The protein localises to the cell projection. The protein resides in the dendrite. Functionally, dimeric G protein-coupled receptor which is activated by the excitatory neurotransmitter L-glutamate. Plays critical roles in modulating synaptic transmission and neuronal excitability. Upon activation by glutamate, inhibits presynaptic calcium channels, reducing further glutamate release and dampening excitatory signaling. Mechanistically, ligand binding causes a conformation change that triggers signaling via guanine nucleotide-binding proteins (G proteins) and modulates the activity of down-stream effectors, such as adenylate cyclase. May mediate suppression of neurotransmission or may be involved in synaptogenesis or synaptic stabilization. In Mus musculus (Mouse), this protein is Metabotropic glutamate receptor 2 (Grm2).